The chain runs to 555 residues: Formate--tetrahydrofolate ligase (555 aa).

Residue 65–72 (TPAGEGKT) participates in ATP binding.

This sequence belongs to the formate--tetrahydrofolate ligase family.

The enzyme catalyses (6S)-5,6,7,8-tetrahydrofolate + formate + ATP = (6R)-10-formyltetrahydrofolate + ADP + phosphate. The protein operates within one-carbon metabolism; tetrahydrofolate interconversion. This chain is Formate--tetrahydrofolate ligase, found in Thermoanaerobacter sp. (strain X514).